The sequence spans 557 residues: Selenoprotein N (557 aa).

A disordered region spans residues 1-24; that stretch reads MGQARPAARRPHSPDPGAQPAPPR. The first 42 residues, 1-42, serve as a signal peptide directing secretion; the sequence is MGQARPAARRPHSPDPGAQPAPPRRRARALALLGALLAAAAA. The 36-residue stretch at 67-102 folds into the EF-hand domain; it reads VLGTDGLFLFSSLDTDQDMYISPEEFKPIAEKLTGS. Asparagine 156 carries an N-linked (GlcNAc...) asparagine glycan. A non-standard amino acid (selenocysteine) is located at residue selenocysteine 428. 2 N-linked (GlcNAc...) asparagine glycosylation sites follow: asparagine 449 and asparagine 497.

As to quaternary structure, interacts with RYR1, RYR2 and RYR3. In terms of processing, N-glycosylated.

It localises to the endoplasmic reticulum membrane. In terms of biological role, plays an important role in cell protection against oxidative stress and in the regulation of redox-related calcium homeostasis. Regulates the calcium level of the ER by protecting the calcium pump ATP2A2 against the oxidoreductase ERO1A-mediated oxidative damage. Within the ER, ERO1A activity increases the concentration of H(2)O(2), which attacks the luminal thiols in ATP2A2 and thus leads to cysteinyl sulfenic acid formation (-SOH) and SEPN1 reduces the SOH back to free thiol (-SH), thus restoring ATP2A2 activity. Acts as a modulator of ryanodine receptor (RyR) activity: protects RyR from oxidation due to increased oxidative stress, or directly controls the RyR redox state, regulating the RyR-mediated calcium mobilization required for normal muscle development and differentiation. Essential for muscle regeneration and satellite cell maintenance in skeletal muscle. The chain is Selenoprotein N from Mus musculus (Mouse).